Consider the following 577-residue polypeptide: Arginine--tRNA ligase (577 aa).

The 'HIGH' region motif lies at 122 to 132 (PNVAKEMHVGH).

This sequence belongs to the class-I aminoacyl-tRNA synthetase family. As to quaternary structure, monomer.

It localises to the cytoplasm. The catalysed reaction is tRNA(Arg) + L-arginine + ATP = L-arginyl-tRNA(Arg) + AMP + diphosphate. The sequence is that of Arginine--tRNA ligase from Salmonella newport (strain SL254).